The chain runs to 82 residues: Sec-independent protein translocase protein TatA (82 aa).

Residues 1-21 (MGIFDWKHWIVILIVVVLVFG) form a helical membrane-spanning segment. Residues 43 to 82 (VNTEEDDKKDQPAAQPAQPLNQPHTIDAQAQKVEEPARKD) are disordered.

The protein belongs to the TatA/E family. In terms of assembly, the Tat system comprises two distinct complexes: a TatABC complex, containing multiple copies of TatA, TatB and TatC subunits, and a separate TatA complex, containing only TatA subunits. Substrates initially bind to the TatABC complex, which probably triggers association of the separate TatA complex to form the active translocon.

It localises to the cell inner membrane. In terms of biological role, part of the twin-arginine translocation (Tat) system that transports large folded proteins containing a characteristic twin-arginine motif in their signal peptide across membranes. TatA could form the protein-conducting channel of the Tat system. This Pseudomonas aeruginosa (strain LESB58) protein is Sec-independent protein translocase protein TatA.